Consider the following 190-residue polypeptide: Potassium-transporting ATPase KdpC subunit (190 aa).

Residues 13 to 33 traverse the membrane as a helical segment; the sequence is VGFLLLTLVCGVVYPGIVTII.

This sequence belongs to the KdpC family. As to quaternary structure, the system is composed of three essential subunits: KdpA, KdpB and KdpC.

The protein resides in the cell membrane. Part of the high-affinity ATP-driven potassium transport (or Kdp) system, which catalyzes the hydrolysis of ATP coupled with the electrogenic transport of potassium into the cytoplasm. This subunit acts as a catalytic chaperone that increases the ATP-binding affinity of the ATP-hydrolyzing subunit KdpB by the formation of a transient KdpB/KdpC/ATP ternary complex. This is Potassium-transporting ATPase KdpC subunit from Listeria welshimeri serovar 6b (strain ATCC 35897 / DSM 20650 / CCUG 15529 / CIP 8149 / NCTC 11857 / SLCC 5334 / V8).